We begin with the raw amino-acid sequence, 445 residues long: 3-phosphoshikimate 1-carboxyvinyltransferase (445 aa).

3-phosphoshikimate is bound by residues Lys-34, Ser-35, and Arg-39. Lys-34 lines the phosphoenolpyruvate pocket. Positions 112 and 140 each coordinate phosphoenolpyruvate. Positions 186, 187, 188, 216, 331, and 358 each coordinate 3-phosphoshikimate. Gln-188 contacts phosphoenolpyruvate. Glu-331 serves as the catalytic Proton acceptor. Phosphoenolpyruvate is bound by residues Arg-362, Arg-403, and Lys-428.

The protein belongs to the EPSP synthase family. In terms of assembly, monomer.

The protein localises to the cytoplasm. It catalyses the reaction 3-phosphoshikimate + phosphoenolpyruvate = 5-O-(1-carboxyvinyl)-3-phosphoshikimate + phosphate. Its pathway is metabolic intermediate biosynthesis; chorismate biosynthesis; chorismate from D-erythrose 4-phosphate and phosphoenolpyruvate: step 6/7. Functionally, catalyzes the transfer of the enolpyruvyl moiety of phosphoenolpyruvate (PEP) to the 5-hydroxyl of shikimate-3-phosphate (S3P) to produce enolpyruvyl shikimate-3-phosphate and inorganic phosphate. The sequence is that of 3-phosphoshikimate 1-carboxyvinyltransferase from Kocuria rhizophila (strain ATCC 9341 / DSM 348 / NBRC 103217 / DC2201).